We begin with the raw amino-acid sequence, 164 residues long: Crossover junction endodeoxyribonuclease RuvC (164 aa).

Active-site residues include aspartate 7, glutamate 67, and aspartate 140. Aspartate 7, glutamate 67, and aspartate 140 together coordinate Mg(2+).

The protein belongs to the RuvC family. Homodimer which binds Holliday junction (HJ) DNA. The HJ becomes 2-fold symmetrical on binding to RuvC with unstacked arms; it has a different conformation from HJ DNA in complex with RuvA. In the full resolvosome a probable DNA-RuvA(4)-RuvB(12)-RuvC(2) complex forms which resolves the HJ. Mg(2+) is required as a cofactor.

It is found in the cytoplasm. It catalyses the reaction Endonucleolytic cleavage at a junction such as a reciprocal single-stranded crossover between two homologous DNA duplexes (Holliday junction).. Functionally, the RuvA-RuvB-RuvC complex processes Holliday junction (HJ) DNA during genetic recombination and DNA repair. Endonuclease that resolves HJ intermediates. Cleaves cruciform DNA by making single-stranded nicks across the HJ at symmetrical positions within the homologous arms, yielding a 5'-phosphate and a 3'-hydroxyl group; requires a central core of homology in the junction. The consensus cleavage sequence is 5'-(A/T)TT(C/G)-3'. Cleavage occurs on the 3'-side of the TT dinucleotide at the point of strand exchange. HJ branch migration catalyzed by RuvA-RuvB allows RuvC to scan DNA until it finds its consensus sequence, where it cleaves and resolves the cruciform DNA. This Chloroflexus aggregans (strain MD-66 / DSM 9485) protein is Crossover junction endodeoxyribonuclease RuvC.